The following is a 503-amino-acid chain: ATP synthase subunit alpha, chloroplastic (503 aa).

Residue 170-177 (GDRQTGKT) participates in ATP binding.

It belongs to the ATPase alpha/beta chains family. As to quaternary structure, F-type ATPases have 2 components, CF(1) - the catalytic core - and CF(0) - the membrane proton channel. CF(1) has five subunits: alpha(3), beta(3), gamma(1), delta(1), epsilon(1). CF(0) has four main subunits: a, b, b' and c.

It is found in the plastid. Its subcellular location is the chloroplast thylakoid membrane. The catalysed reaction is ATP + H2O + 4 H(+)(in) = ADP + phosphate + 5 H(+)(out). Functionally, produces ATP from ADP in the presence of a proton gradient across the membrane. The alpha chain is a regulatory subunit. This Trieres chinensis (Marine centric diatom) protein is ATP synthase subunit alpha, chloroplastic.